A 968-amino-acid polypeptide reads, in one-letter code: RNA polymerase-associated protein RapA (968 aa).

Residues 164–334 (DVGRRHAPRV…FARLRLLDPN (171 aa)) enclose the Helicase ATP-binding domain. 177–184 (DEVGLGKT) contributes to the ATP binding site. Positions 280-283 (DEAH) match the DEAH box motif. The region spanning 490–685 (RVEWLMGYLT…ALKAQLEQGR (196 aa)) is the Helicase C-terminal domain.

Belongs to the SNF2/RAD54 helicase family. RapA subfamily. In terms of assembly, interacts with the RNAP. Has a higher affinity for the core RNAP than for the holoenzyme. Its ATPase activity is stimulated by binding to RNAP.

Functionally, transcription regulator that activates transcription by stimulating RNA polymerase (RNAP) recycling in case of stress conditions such as supercoiled DNA or high salt concentrations. Probably acts by releasing the RNAP, when it is trapped or immobilized on tightly supercoiled DNA. Does not activate transcription on linear DNA. Probably not involved in DNA repair. The chain is RNA polymerase-associated protein RapA from Salmonella typhi.